The chain runs to 230 residues: MDLLPFLLDANLSATNPPAIPHWWKRQPLIPNLLSQELKNYLKLNVKEKNIQIADQVIIDETAGEVVIGANTRICHGAVIQGPVVIGANCLIGNYAFIRPGTIISNGVKIGFATEIKNAVIEAEATIGPQCFIADSVVANQAYLGAQVRTSNHRLDEQPVSVRTPEGIIATGCDKLGCYIGQRSRLGVQVIILPGRIISPNTQLGPRVIVERNLPTGTYSLRQELIRTGD.

Belongs to the transferase hexapeptide repeat family.

This is an uncharacterized protein from Escherichia coli (strain K12).